A 167-amino-acid polypeptide reads, in one-letter code: UPF0587 protein F46B6.12 (167 aa).

Residues C34, C37, C68, and C71 each coordinate Zn(2+).

This sequence belongs to the UPF0587 family.

The sequence is that of UPF0587 protein F46B6.12 from Caenorhabditis elegans.